The following is a 668-amino-acid chain: Probable metal-nicotianamine transporter YSL5 (668 aa).

The span at 1–11 (MPPPETSSAAA) shows a compositional bias: low complexity. Residues 1–22 (MPPPETSSAAAPSPPSPDPLPP) are disordered. Positions 12-22 (PSPPSPDPLPP) are enriched in pro residues. 14 helical membrane passes run 27–47 (LTLRGVAVAAVLGSLLCVVIH), 51–71 (LTVGVIPALNVASGLLAFFLA), 102–122 (CAIACGSLAFSGCSSSYIFAM), 147–167 (LGWMIGFMFLIALIGPFSIVM), 209–229 (LVKYMSLSFGWSFFKWFFSGV), 268–288 (IVNCSVFLGSVISWGFLWPFI), 315–335 (IAISVILGDGLYNLVKVFLII), 383–403 (LAVSGYIVLAAISTVAVPIIF), 410–430 (LVLVCYFLAPAIAFCNSYGMG), 443–463 (IALFVFASLVGSDGGVIAGLA), 501–521 (IGVALGCIIAPLTLWLFWTAF), 557–577 (LEICCVFFLAALIINLMKDVV), 595–615 (FYIGAYFGVDMFIGTLILFAW), and 633–653 (GLICGDGVWSIPSAVLSILGV).

The protein belongs to the YSL (TC 2.A.67.2) family. As to expression, expressed in roots.

It localises to the membrane. Functionally, may be involved in the transport of nicotianamine-chelated metals. This chain is Probable metal-nicotianamine transporter YSL5 (YSL5), found in Oryza sativa subsp. japonica (Rice).